A 468-amino-acid polypeptide reads, in one-letter code: Acetyl-CoA decarbonylase/synthase complex subunit gamma 1 (468 aa).

Residues 1 to 61 form the 4Fe-4S domain; sequence MKINSPLEAY…YAKKLAELDR (61 aa). Residues cysteine 18, cysteine 21, cysteine 26, and cysteine 43 each contribute to the [4Fe-4S] cluster site.

In terms of assembly, heterodimer of delta and gamma chains. The ACDS complex is made up of alpha, epsilon, beta, gamma and delta chains with a probable stoichiometry of (alpha(2)epsilon(2))(4)-beta(8)-(gamma(1)delta(1))(8). Corrinoid is required as a cofactor. The cofactor is [4Fe-4S] cluster.

The catalysed reaction is 5,6,7,8-tetrahydrosarcinapterin + methyl-Co(III)-[corrinoid Fe-S protein] = 5-methyltetrahydrosarcinapterin + Co(I)-[corrinoid Fe-S protein] + H(+). The protein operates within one-carbon metabolism; methanogenesis from acetate. In terms of biological role, part of a complex that catalyzes the reversible cleavage of acetyl-CoA, allowing growth on acetate as sole source of carbon and energy. This Methanosarcina thermophila protein is Acetyl-CoA decarbonylase/synthase complex subunit gamma 1.